We begin with the raw amino-acid sequence, 117 residues long: MPPKKDAKSSAKQPQKTQKKKEGSGGGKAKKKKWSKGKVRDKLNNQVLFDKATYEKLYKEVPAYKLITPSVVSERLKIRGSLAKRALIELREKGLIKQVVQHHSQVIYTRATKGDEA.

The tract at residues 1-38 (MPPKKDAKSSAKQPQKTQKKKEGSGGGKAKKKKWSKGK) is disordered. The span at 28–37 (KAKKKKWSKG) shows a compositional bias: basic residues.

The protein belongs to the eukaryotic ribosomal protein eS25 family.

The chain is Small ribosomal subunit protein eS25 (RpS25) from Drosophila melanogaster (Fruit fly).